We begin with the raw amino-acid sequence, 668 residues long: Chitin synthase 8 (668 aa).

The span at 1–26 (MTSRMPTSGHRTSSSSSERGNMSVQQ) shows a compositional bias: polar residues. The disordered stretch occupies residues 1–62 (MTSRMPTSGH…PAPLRPGWTL (62 aa)). N-linked (GlcNAc...) asparagine glycosylation is found at Asn21, Asn98, and Asn101. The next 2 helical transmembrane spans lie at 136 to 156 (WSLI…GWKY) and 162 to 182 (FFLV…ICII). N-linked (GlcNAc...) asparagine glycosylation is found at Asn216 and Asn476. Helical transmembrane passes span 522–542 (WALG…IILI), 548–568 (LIAV…VELL), 583–603 (VFLG…CIGF), and 615–635 (YFAG…IILV).

The protein belongs to the chitin synthase family. Class VIII subfamily.

Its subcellular location is the cell membrane. The protein localises to the cell septum. It carries out the reaction [(1-&gt;4)-N-acetyl-beta-D-glucosaminyl](n) + UDP-N-acetyl-alpha-D-glucosamine = [(1-&gt;4)-N-acetyl-beta-D-glucosaminyl](n+1) + UDP + H(+). Its function is as follows. Polymerizes chitin, a structural polymer of the cell wall and septum, by transferring the sugar moiety of UDP-GlcNAc to the non-reducing end of the growing chitin polymer. Participated in the development of cell wall and plays a critical role in fungal response to environmental stresses. Necessary for pathogenicity and deoxinivalenol (DON) production. The chain is Chitin synthase 8 from Gibberella zeae (strain ATCC MYA-4620 / CBS 123657 / FGSC 9075 / NRRL 31084 / PH-1) (Wheat head blight fungus).